The sequence spans 307 residues: Aspartate carbamoyltransferase catalytic subunit (307 aa).

Carbamoyl phosphate-binding residues include arginine 55 and threonine 56. An L-aspartate-binding site is contributed by lysine 85. Arginine 106, histidine 134, and glutamine 137 together coordinate carbamoyl phosphate. The L-aspartate site is built by arginine 167 and arginine 228. Leucine 266 and proline 267 together coordinate carbamoyl phosphate.

Belongs to the aspartate/ornithine carbamoyltransferase superfamily. ATCase family. In terms of assembly, heterododecamer (2C3:3R2) of six catalytic PyrB chains organized as two trimers (C3), and six regulatory PyrI chains organized as three dimers (R2).

The enzyme catalyses carbamoyl phosphate + L-aspartate = N-carbamoyl-L-aspartate + phosphate + H(+). It participates in pyrimidine metabolism; UMP biosynthesis via de novo pathway; (S)-dihydroorotate from bicarbonate: step 2/3. Its function is as follows. Catalyzes the condensation of carbamoyl phosphate and aspartate to form carbamoyl aspartate and inorganic phosphate, the committed step in the de novo pyrimidine nucleotide biosynthesis pathway. The polypeptide is Aspartate carbamoyltransferase catalytic subunit (Tolumonas auensis (strain DSM 9187 / NBRC 110442 / TA 4)).